We begin with the raw amino-acid sequence, 121 residues long: Small ribosomal subunit protein uS13 (121 aa).

The tract at residues 91–121 is disordered; the sequence is HKRGLPVRGQRTRTNARTRKGPRRAAASLKK.

The protein belongs to the universal ribosomal protein uS13 family. As to quaternary structure, part of the 30S ribosomal subunit. Forms a loose heterodimer with protein S19. Forms two bridges to the 50S subunit in the 70S ribosome.

Its function is as follows. Located at the top of the head of the 30S subunit, it contacts several helices of the 16S rRNA. In the 70S ribosome it contacts the 23S rRNA (bridge B1a) and protein L5 of the 50S subunit (bridge B1b), connecting the 2 subunits; these bridges are implicated in subunit movement. Contacts the tRNAs in the A and P-sites. The polypeptide is Small ribosomal subunit protein uS13 (Bordetella petrii (strain ATCC BAA-461 / DSM 12804 / CCUG 43448)).